The following is a 131-amino-acid chain: Large ribosomal subunit protein bL19 (131 aa).

This sequence belongs to the bacterial ribosomal protein bL19 family.

In terms of biological role, this protein is located at the 30S-50S ribosomal subunit interface and may play a role in the structure and function of the aminoacyl-tRNA binding site. In Afipia carboxidovorans (strain ATCC 49405 / DSM 1227 / KCTC 32145 / OM5) (Oligotropha carboxidovorans), this protein is Large ribosomal subunit protein bL19.